The chain runs to 361 residues: Peptide chain release factor 1 (361 aa).

The residue at position 237 (Gln237) is an N5-methylglutamine. The disordered stretch occupies residues 283 to 307 (AQQQEQQEQQSSTRKELIGSGDRSQ).

The protein belongs to the prokaryotic/mitochondrial release factor family. In terms of processing, methylated by PrmC. Methylation increases the termination efficiency of RF1.

It localises to the cytoplasm. Functionally, peptide chain release factor 1 directs the termination of translation in response to the peptide chain termination codons UAG and UAA. This is Peptide chain release factor 1 from Vesicomyosocius okutanii subsp. Calyptogena okutanii (strain HA).